Reading from the N-terminus, the 482-residue chain is Cobyric acid synthase (482 aa).

The GATase cobBQ-type domain occupies 243-430; that stretch reads ACKVVVPQLE…LHGLFTSDAF (188 aa). The Nucleophile role is filled by Cys-325. His-422 is a catalytic residue.

It belongs to the CobB/CobQ family. CobQ subfamily.

Its pathway is cofactor biosynthesis; adenosylcobalamin biosynthesis. Catalyzes amidations at positions B, D, E, and G on adenosylcobyrinic A,C-diamide. NH(2) groups are provided by glutamine, and one molecule of ATP is hydrogenolyzed for each amidation. The chain is Cobyric acid synthase from Ruegeria sp. (strain TM1040) (Silicibacter sp.).